The following is a 94-amino-acid chain: Cell division topological specificity factor (94 aa).

It belongs to the MinE family.

In terms of biological role, prevents the cell division inhibition by proteins MinC and MinD at internal division sites while permitting inhibition at polar sites. This ensures cell division at the proper site by restricting the formation of a division septum at the midpoint of the long axis of the cell. The protein is Cell division topological specificity factor of Clostridioides difficile (strain 630) (Peptoclostridium difficile).